The primary structure comprises 179 residues: MYHVIAATTNPAKINAIKLAFEQVFGKDTFDIEDINVDSRVPQQPIGNTETRTGARQRVMAARQVRPEADFWVGVEAGIEDDMTFAWIVIEHEQIRGESRSASLMLPEQILKGVREGRELGDEMAFLTKIDNIKQKGGAIGYFTDGLLSRTSVYQQAIVLALVPVTHDIYKQLNKKDDE.

Position 8 to 13 (8 to 13) interacts with substrate; the sequence is TTNPAK. Mg(2+) is bound by residues Asp-38 and Glu-68. A substrate-binding site is contributed by 68-69; the sequence is EA.

It belongs to the YjjX NTPase family. In terms of assembly, homodimer. Requires Mg(2+) as cofactor. The cofactor is Mn(2+).

The enzyme catalyses XTP + H2O = XDP + phosphate + H(+). It catalyses the reaction ITP + H2O = IDP + phosphate + H(+). Its function is as follows. Phosphatase that hydrolyzes non-canonical purine nucleotides such as XTP and ITP to their respective diphosphate derivatives. Probably excludes non-canonical purines from DNA/RNA precursor pool, thus preventing their incorporation into DNA/RNA and avoiding chromosomal lesions. This is Inosine/xanthosine triphosphatase from Proteus mirabilis (strain HI4320).